Reading from the N-terminus, the 873-residue chain is Leucine--tRNA ligase (873 aa).

Positions 42 to 52 (PYPSGKLHMGH) match the 'HIGH' region motif. The segment at 624–643 (PVEIGGTEKMSKSKNNGVDP) is disordered. Positions 632 to 636 (KMSKS) match the 'KMSKS' region motif. An ATP-binding site is contributed by K635.

Belongs to the class-I aminoacyl-tRNA synthetase family.

It localises to the cytoplasm. It catalyses the reaction tRNA(Leu) + L-leucine + ATP = L-leucyl-tRNA(Leu) + AMP + diphosphate. In Pseudomonas aeruginosa (strain ATCC 15692 / DSM 22644 / CIP 104116 / JCM 14847 / LMG 12228 / 1C / PRS 101 / PAO1), this protein is Leucine--tRNA ligase.